Here is a 54-residue protein sequence, read N- to C-terminus: UPF0391 membrane protein Pmen_0080 (54 aa).

2 consecutive transmembrane segments (helical) span residues 4 to 24 and 28 to 48; these read WALT…GGIA and AGIA…SFIM.

The protein belongs to the UPF0391 family.

It is found in the cell membrane. The protein is UPF0391 membrane protein Pmen_0080 of Ectopseudomonas mendocina (strain ymp) (Pseudomonas mendocina).